A 284-amino-acid chain; its full sequence is 2-dehydro-3-deoxyphosphooctonate aldolase (284 aa).

This sequence belongs to the KdsA family.

Its subcellular location is the cytoplasm. It catalyses the reaction D-arabinose 5-phosphate + phosphoenolpyruvate + H2O = 3-deoxy-alpha-D-manno-2-octulosonate-8-phosphate + phosphate. Its pathway is carbohydrate biosynthesis; 3-deoxy-D-manno-octulosonate biosynthesis; 3-deoxy-D-manno-octulosonate from D-ribulose 5-phosphate: step 2/3. It functions in the pathway bacterial outer membrane biogenesis; lipopolysaccharide biosynthesis. This Burkholderia vietnamiensis (strain G4 / LMG 22486) (Burkholderia cepacia (strain R1808)) protein is 2-dehydro-3-deoxyphosphooctonate aldolase.